The chain runs to 348 residues: Dihydroorotase (348 aa).

Residues His17 and His19 each contribute to the Zn(2+) site. Substrate-binding positions include His19–Arg21 and Asn45. 3 residues coordinate Zn(2+): Lys103, His140, and His178. At Lys103 the chain carries N6-carboxylysine. His140 contacts substrate. Leu223 contacts substrate. Residue Asp251 participates in Zn(2+) binding. Asp251 is a catalytic residue. Substrate contacts are provided by His255 and Ala267.

The protein belongs to the metallo-dependent hydrolases superfamily. DHOase family. Class II DHOase subfamily. Homodimer. Requires Zn(2+) as cofactor. It depends on Co(2+) as a cofactor. Mg(2+) is required as a cofactor. Ni(2+) serves as cofactor.

The enzyme catalyses (S)-dihydroorotate + H2O = N-carbamoyl-L-aspartate + H(+). Its pathway is pyrimidine metabolism; UMP biosynthesis via de novo pathway; (S)-dihydroorotate from bicarbonate: step 3/3. Its function is as follows. Catalyzes the reversible cyclization of carbamoyl aspartate to dihydroorotate. The chain is Dihydroorotase from Klebsiella pneumoniae subsp. pneumoniae (strain ATCC 700721 / MGH 78578).